The sequence spans 479 residues: Bifunctional NAD(P)H-hydrate repair enzyme Nnr (479 aa).

The interval 1–214 (MTVIIQGRSF…GIGIPLLAEI (214 aa)) is NAD(P)H-hydrate epimerase. Residues 31–214 (MRRIDQNAQA…GIGIPLLAEI (184 aa)) form the YjeF N-terminal domain. The tract at residues 76 to 80 (NNGGD) is NADPHX 1; for epimerase activity. N77 and D146 together coordinate K(+). Positions 150-156 (GTGGTGS) are NADPHX 1; for epimerase activity. Residue D179 participates in (6S)-NADPHX binding. S182 provides a ligand contact to K(+). The 259-residue stretch at 216–474 (TGPGDLLILR…TAVPQVLFRS (259 aa)) folds into the YjeF C-terminal domain. Residues 216–479 (TGPGDLLILR…VLFRSTSERE (264 aa)) are ADP-dependent (S)-NAD(P)H-hydrate dehydratase. G312 is a (6S)-NADPHX binding site. The NADPHX 2; for dehydratase activity stretch occupies residues 353-359 (HAGEFAR). Residues 388 to 392 (KGAVD) and 407 to 416 (TPAMTTGGTG) each bind ADP. Residue D417 participates in (6S)-NADPHX binding.

The protein in the N-terminal section; belongs to the NnrE/AIBP family. It in the C-terminal section; belongs to the NnrD/CARKD family. K(+) serves as cofactor.

It carries out the reaction (6S)-NADHX + ADP = AMP + phosphate + NADH + H(+). The catalysed reaction is (6S)-NADPHX + ADP = AMP + phosphate + NADPH + H(+). The enzyme catalyses (6R)-NADHX = (6S)-NADHX. It catalyses the reaction (6R)-NADPHX = (6S)-NADPHX. Functionally, bifunctional enzyme that catalyzes the epimerization of the S- and R-forms of NAD(P)HX and the dehydration of the S-form of NAD(P)HX at the expense of ADP, which is converted to AMP. This allows the repair of both epimers of NAD(P)HX, a damaged form of NAD(P)H that is a result of enzymatic or heat-dependent hydration. This chain is Bifunctional NAD(P)H-hydrate repair enzyme Nnr (nnr), found in Methanospirillum hungatei JF-1 (strain ATCC 27890 / DSM 864 / NBRC 100397 / JF-1).